The primary structure comprises 397 residues: UPF0761 membrane protein Kkor_1635 (397 aa).

A run of 6 helical transmembrane segments spans residues 36–56 (MLAL…FPSF), 92–112 (NLSA…MRSI), 132–152 (ILAY…SLAA), 168–188 (ILTF…LYMV), 201–221 (IAAV…AIFV), and 237–257 (IPIF…GVIV).

Belongs to the UPF0761 family.

It is found in the cell inner membrane. In Kangiella koreensis (strain DSM 16069 / JCM 12317 / KCTC 12182 / SW-125), this protein is UPF0761 membrane protein Kkor_1635.